A 134-amino-acid polypeptide reads, in one-letter code: Fluoride-specific ion channel FluC 2 (134 aa).

4 consecutive transmembrane segments (helical) span residues L10 to L30, L43 to P63, L67 to A87, and F100 to L120. Residues G75 and T78 each coordinate Na(+).

The protein belongs to the fluoride channel Fluc/FEX (TC 1.A.43) family.

The protein localises to the cell inner membrane. It catalyses the reaction fluoride(in) = fluoride(out). Its activity is regulated as follows. Na(+) is not transported, but it plays an essential structural role and its presence is essential for fluoride channel function. In terms of biological role, fluoride-specific ion channel. Important for reducing fluoride concentration in the cell, thus reducing its toxicity. The sequence is that of Fluoride-specific ion channel FluC 2 from Synechococcus sp. (strain CC9902).